Here is a 196-residue protein sequence, read N- to C-terminus: Peroxisomal membrane protein 2 (196 aa).

Topologically, residues 1–30 are cytoplasmic; that stretch reads MAPAASKLRAEAGLGPLPRRALSQYLRLLR. The chain crosses the membrane as a helical span at residues 31 to 51; sequence LYPVLTKAATSGILSALGNFL. At 52–76 the chain is on the peroxisomal side; sequence AQLIEKKQKKENCSQKLDVSGPLRY. The chain crosses the membrane as a helical span at residues 77–97; sequence AIYGFFFTGPLGHFFYLLMER. The Cytoplasmic portion of the chain corresponds to 98–115; the sequence is WIPSEVPLAGIKRLLLDR. A helical membrane pass occupies residues 116-136; sequence LLFAPAFLSLFFLVMNFLEGQ. The Peroxisomal portion of the chain corresponds to 137–174; it reads DTAAFAAKMKSGFWPALRMNWRVWTPVQFININYIPVQ. A helical transmembrane segment spans residues 175 to 196; it reads FRVLFANLVALFWYAYLASLGK.

The protein belongs to the peroxisomal membrane protein PXMP2/4 family. As to quaternary structure, interacts with PEX19 and SIVA1.

It is found in the peroxisome membrane. Seems to be involved in pore-forming activity and may contribute to the unspecific permeability of the peroxisomal membrane. The sequence is that of Peroxisomal membrane protein 2 (PXMP2) from Bos taurus (Bovine).